A 655-amino-acid polypeptide reads, in one-letter code: MGIFSIANQHIRFAVKLACAIVLALFIGFHFQLETPRWAVLTAAIVAAGPAFAAGGEPYSGAIRYRGMLRIIGTFIGCIAALIIIISMIRAPLLMILVCCVWAGFCTWISSLVRIENSYAWGLSGYTALIIVITIQMEPLLTPQFALERCSEIVIGIGCAILADLLFSPRSIKQEVDRELDSLLVAQYQLMQLCIKHGDSEEVDNAWGDLVRRTAALEGMRSNLNMESSRWVRANRRLKALNTLSLTLITQSCETYLIQNTRPELITDTFRELFETPVETVQDVHRQLKRMRRVIVWTGERETPVTLYSWVGAATRYLLLKRGVISNTKISATEEEILQGEPVVKVESAERHHAMVNFWRTTLSCILGTLFWLWTGWTSGNGAMVMIAVVTSLAMRLPNPRMVCIDFIYGTLAALPLGLLYFLVIIPNTQQSMLLLCLSLAVLGFFIGIEVQKRRLGSMGALASTINIIVLDNPMTFHFSQFLDSALGQIVGCMLAFIVILLVRDKSKDRTGRVLLNQFVSAAVSAMTTNVVRRKENRLPALYQQLFLLMNKFPGDLPKFRLALTMIIAHQRLRDAPIPVNEDLSVFHRQLRRTADHVISAGSDDKRRRYFGQLLDELDIYQEKLRIWEAPPQVTEPVKRLTGMLHKYQNALTDS.

11 consecutive transmembrane segments (helical) span residues 13–33, 38–58, 69–89, 93–113, 121–141, 152–172, 370–390, 407–427, 431–451, 459–479, and 482–502; these read FAVKLACAIVLALFIGFHFQL, WAVLTAAIVAAGPAFAAGGEP, LRIIGTFIGCIAALIIIISMI, LLMILVCCVWAGFCTWISSLV, WGLSGYTALIIVITIQMEPLL, EIVIGIGCAILADLLFSPRSI, LFWLWTGWTSGNGAMVMIAVV, FIYGTLAALPLGLLYFLVIIP, QSMLLLCLSLAVLGFFIGIEV, MGALASTINIIVLDNPMTFHF, and FLDSALGQIVGCMLAFIVILL.

This sequence belongs to the aromatic acid exporter ArAE (TC 2.A.85) family.

The protein localises to the cell inner membrane. In terms of biological role, forms an efflux pump with AaeA. Could function as a metabolic relief valve, allowing to eliminate certain compounds when they accumulate to high levels in the cell. This is p-hydroxybenzoic acid efflux pump subunit AaeB from Salmonella heidelberg (strain SL476).